The chain runs to 413 residues: Multifunctional CCA protein (413 aa).

Residues G8 and R11 each contribute to the ATP site. Residues G8 and R11 each contribute to the CTP site. 2 residues coordinate Mg(2+): D21 and D23. ATP contacts are provided by R91, R141, and R144. R91, R141, and R144 together coordinate CTP. The HD domain occupies 230–331 (TGAHLLLVLD…VRLLERCDAL (102 aa)).

It belongs to the tRNA nucleotidyltransferase/poly(A) polymerase family. Bacterial CCA-adding enzyme type 1 subfamily. As to quaternary structure, monomer. Can also form homodimers and oligomers. Mg(2+) serves as cofactor. Requires Ni(2+) as cofactor.

The enzyme catalyses a tRNA precursor + 2 CTP + ATP = a tRNA with a 3' CCA end + 3 diphosphate. It catalyses the reaction a tRNA with a 3' CCA end + 2 CTP + ATP = a tRNA with a 3' CCACCA end + 3 diphosphate. Catalyzes the addition and repair of the essential 3'-terminal CCA sequence in tRNAs without using a nucleic acid template. Adds these three nucleotides in the order of C, C, and A to the tRNA nucleotide-73, using CTP and ATP as substrates and producing inorganic pyrophosphate. tRNA 3'-terminal CCA addition is required both for tRNA processing and repair. Also involved in tRNA surveillance by mediating tandem CCA addition to generate a CCACCA at the 3' terminus of unstable tRNAs. While stable tRNAs receive only 3'-terminal CCA, unstable tRNAs are marked with CCACCA and rapidly degraded. The sequence is that of Multifunctional CCA protein from Verminephrobacter eiseniae (strain EF01-2).